The following is a 486-amino-acid chain: NADH-quinone oxidoreductase subunit N (486 aa).

14 helical membrane-spanning segments follow: residues 14–34 (SIAP…LNFI), 45–65 (MLAI…SGIV), 77–97 (FAFI…PLTL), 105–125 (CSLA…EFMV), 130–150 (LIVI…LIAL), 163–183 (YFTM…IFYL), 203–223 (ILIA…LSLI), 237–257 (SEVM…IVAM), 268–288 (IAFI…LANI), 299–319 (MLAF…VIGT), 326–346 (LFLY…VLWF), 377–397 (FLMA…VFWG), 409–429 (GFIF…YYYL), and 459–479 (FIIT…KFWT).

It belongs to the complex I subunit 2 family. In terms of assembly, NDH-1 is composed of 14 different subunits. Subunits NuoA, H, J, K, L, M, N constitute the membrane sector of the complex.

Its subcellular location is the cell inner membrane. It carries out the reaction a quinone + NADH + 5 H(+)(in) = a quinol + NAD(+) + 4 H(+)(out). In terms of biological role, NDH-1 shuttles electrons from NADH, via FMN and iron-sulfur (Fe-S) centers, to quinones in the respiratory chain. The immediate electron acceptor for the enzyme in this species is believed to be ubiquinone. Couples the redox reaction to proton translocation (for every two electrons transferred, four hydrogen ions are translocated across the cytoplasmic membrane), and thus conserves the redox energy in a proton gradient. The chain is NADH-quinone oxidoreductase subunit N from Campylobacter hominis (strain ATCC BAA-381 / DSM 21671 / CCUG 45161 / LMG 19568 / NCTC 13146 / CH001A).